Reading from the N-terminus, the 424-residue chain is Putative polyketide beta-ketoacyl synthase 2 (424 aa).

The Ketosynthase family 3 (KS3) domain occupies 13–416 (SRRAVVTGLG…GSNSALVLRR (404 aa)).

It belongs to the thiolase-like superfamily. Beta-ketoacyl-ACP synthases family.

Involved in developmentally regulated synthesis of a compound biosynthetically related to polyketide antibiotics which is essential for spore color in Streptomyces coelicolor. The polypeptide is Putative polyketide beta-ketoacyl synthase 2 (Streptomyces coelicolor (strain ATCC BAA-471 / A3(2) / M145)).